The chain runs to 428 residues: Putative UDP-glucose 6-dehydrogenase YtcA (428 aa).

The first 23 residues, 1 to 23 (MKICVVGAGYVGLTLSAALASIG), serve as a signal peptide directing secretion. NAD(+) is bound by residues 2–19 (KICV…SAAL), Val-11, Asp-30, Lys-35, Thr-118, and Glu-152. Residues 148–152 (EFLRE), Lys-203, Asn-207, 248–252 (FLQAG), and Gly-256 each bind substrate. The active-site Nucleophile is the Cys-259. Residue Lys-262 participates in NAD(+) binding. Lys-319 is a substrate binding site. An NAD(+)-binding site is contributed by Arg-326.

This sequence belongs to the UDP-glucose/GDP-mannose dehydrogenase family.

The enzyme catalyses UDP-alpha-D-glucose + 2 NAD(+) + H2O = UDP-alpha-D-glucuronate + 2 NADH + 3 H(+). Its pathway is nucleotide-sugar biosynthesis; UDP-alpha-D-glucuronate biosynthesis; UDP-alpha-D-glucuronate from UDP-alpha-D-glucose: step 1/1. In terms of biological role, catalyzes the conversion of UDP-glucose into UDP-glucuronate, one of the precursors of teichuronic acid. This Bacillus subtilis (strain 168) protein is Putative UDP-glucose 6-dehydrogenase YtcA (ytcA).